The following is a 229-amino-acid chain: Probable queuosine precursor transporter (229 aa).

7 helical membrane-spanning segments follow: residues 6–26 (FWIF…KGFG), 28–48 (MGLF…VVKT), 49–69 (VELF…IFFA), 86–106 (VWLG…VLLF), 118–138 (LETI…AFIF), 160–182 (LWLR…FTAV), and 192–214 (VWLH…SLPY).

Belongs to the vitamin uptake transporter (VUT/ECF) (TC 2.A.88) family. Q precursor transporter subfamily.

It localises to the cell membrane. Involved in the import of queuosine (Q) precursors, required for Q precursor salvage. The polypeptide is Probable queuosine precursor transporter (ypdP) (Bacillus subtilis (strain 168)).